The primary structure comprises 761 residues: Cytoplasmic export protein 1 (761 aa).

HEAT repeat units follow at residues 385–423 and 498–534; these read IYPH…LNNE and NTIA…LEKL. Disordered stretches follow at residues 660 to 692 and 714 to 761; these read DDGW…IAPS and STVT…DTNW. 2 stretches are compositionally biased toward polar residues: residues 680–692 and 714–737; these read PQNS…IAPS and STVT…SIRG. Over residues 747–761 the composition is skewed to acidic residues; that stretch reads GWDDDGDSDSWDTNW. Residue Ser-754 is modified to Phosphoserine.

In terms of assembly, associates with the nuclear pore complex (NPC). Interacts with GSP1, LOS1, MSN5, NUP116 and TEF2.

Its subcellular location is the cytoplasm. Component of the nuclear tRNA export machinery that my collect tRNA from the nuclear tRNA export receptors of the aminoacylation-dependent export and may deliver aminoacylated tRNAs to the translation machinery pathway at the nuclear pore complex. In Saccharomyces cerevisiae (strain ATCC 204508 / S288c) (Baker's yeast), this protein is Cytoplasmic export protein 1 (CEX1).